The following is a 262-amino-acid chain: Phosphatidylglycerol--prolipoprotein diacylglyceryl transferase (262 aa).

4 consecutive transmembrane segments (helical) span residues 9 to 29, 41 to 61, 80 to 100, and 109 to 129; these read LGPL…ILAV, IIPD…ILGA, IFAI…GALV, and LINT…AQSL. Arg-131 contacts a 1,2-diacyl-sn-glycero-3-phospho-(1'-sn-glycerol). 3 helical membrane-spanning segments follow: residues 167-187, 197-217, and 226-246; these read QPTF…ILIF, GHIT…IEGM, and GFRV…MIVI.

It belongs to the Lgt family.

It is found in the cell membrane. The catalysed reaction is L-cysteinyl-[prolipoprotein] + a 1,2-diacyl-sn-glycero-3-phospho-(1'-sn-glycerol) = an S-1,2-diacyl-sn-glyceryl-L-cysteinyl-[prolipoprotein] + sn-glycerol 1-phosphate + H(+). It participates in protein modification; lipoprotein biosynthesis (diacylglyceryl transfer). Functionally, catalyzes the transfer of the diacylglyceryl group from phosphatidylglycerol to the sulfhydryl group of the N-terminal cysteine of a prolipoprotein, the first step in the formation of mature lipoproteins. The polypeptide is Phosphatidylglycerol--prolipoprotein diacylglyceryl transferase (Streptococcus pneumoniae serotype 4 (strain ATCC BAA-334 / TIGR4)).